The sequence spans 873 residues: MQDKYQPAAVETAAQQHWESTAAFRVTEDATRPKYYCLSMFPYPSGKLHMGHVRNYTIGDVLARFHRMRGYNVLQPMGWDAFGMPAENAAIQNNVPPAKWTYANIDYMKGQLKRLGFAIDWSREVATCTPEYYRWEQWLFTRLFEKGLIYKKLGTVNWDPVDETVLANEQVIDGRGWRSGALVEKREIPMYYMKITAYADELLEALDGLPGWPEQVKLMQKNWIGRSEGVEVHFPYDLSTIGSSGVLKVFTTRGDTLMGATYVAVAAEHPLATQAAAGNPELAAFIDECKQGGVAEADLATMEKKGMPTGLRVVHPITGEYLPVWVANYVLMGYGEGAVMAVPAHDERDFAFATKYKLPIKMVVRSTHDAYENVAAPWIDAYAEHGKLVNSGKYDNLHFQDAVDAIAADLAAKGLGNKRVQYRLRDWGISRQRYWGCPIPMVRCDDCGDVPVPDEQLPVVLPENVEITGRGSPLAKMPEFYQCSCPKCGKPARRETDTMDTFVESSWYFLRYASPDSTTAMVDERVNYWAPVDQYIGGIEHAILHLLYSRFFTRAMRDCGLVNVSEPFTNLLTQGMVVAETYYRELDGGKKQWLNPADVQVERDERGRITAAKLASDGLPVVIGGTEKMSKSKNNGVDPQALVDQYGADTARLFIIFAAPPDQQLEWSDSGVEGASRFLRRVWNFGHAFASEFRAALPAARALAAGTLPAALADVRREIHTHLKQANYDFGKHQFNTVVSAAMKILNALEKAPRDDAAAHAEVAEEGFSILVRLLSPITPHIAHALWQDCGFGGDIVQAAWPEPLEAALKQDEIELMLQVNGKLRGSVKVAADAGKSDIEALALASEAAQKFMEGKPPKKVVVVPGRLVNIVV.

A 'HIGH' region motif is present at residues Pro42–His52. A 'KMSKS' region motif is present at residues Lys628–Ser632. Lys631 lines the ATP pocket.

It belongs to the class-I aminoacyl-tRNA synthetase family.

It localises to the cytoplasm. The catalysed reaction is tRNA(Leu) + L-leucine + ATP = L-leucyl-tRNA(Leu) + AMP + diphosphate. The chain is Leucine--tRNA ligase from Azoarcus sp. (strain BH72).